The chain runs to 200 residues: Ribonuclease HII (200 aa).

Positions 10-200 (LIEAGCDEAG…LGDGQLNLNF (191 aa)) constitute an RNase H type-2 domain. Residues aspartate 16, glutamate 17, and aspartate 108 each coordinate a divalent metal cation.

This sequence belongs to the RNase HII family. It depends on Mn(2+) as a cofactor. Mg(2+) is required as a cofactor.

The protein localises to the cytoplasm. It catalyses the reaction Endonucleolytic cleavage to 5'-phosphomonoester.. Functionally, endonuclease that specifically degrades the RNA of RNA-DNA hybrids. The sequence is that of Ribonuclease HII from Bacteroides thetaiotaomicron (strain ATCC 29148 / DSM 2079 / JCM 5827 / CCUG 10774 / NCTC 10582 / VPI-5482 / E50).